The chain runs to 599 residues: Elongation factor 4 (599 aa).

The region spanning 2 to 184 is the tr-type G domain; it reads NYKRNFSIIA…RLVRDIPAPK (183 aa). Residues 14–19 and 131–134 contribute to the GTP site; these read DHGKST and NKID.

This sequence belongs to the TRAFAC class translation factor GTPase superfamily. Classic translation factor GTPase family. LepA subfamily.

It localises to the cell membrane. It catalyses the reaction GTP + H2O = GDP + phosphate + H(+). Its function is as follows. Required for accurate and efficient protein synthesis under certain stress conditions. May act as a fidelity factor of the translation reaction, by catalyzing a one-codon backward translocation of tRNAs on improperly translocated ribosomes. Back-translocation proceeds from a post-translocation (POST) complex to a pre-translocation (PRE) complex, thus giving elongation factor G a second chance to translocate the tRNAs correctly. Binds to ribosomes in a GTP-dependent manner. This chain is Elongation factor 4, found in Hamiltonella defensa subsp. Acyrthosiphon pisum (strain 5AT).